Reading from the N-terminus, the 506-residue chain is Aerotaxis receptor (506 aa).

Residues 1–166 (MSSHPYVTQQ…PSLPLRWRAR (166 aa)) lie on the Cytoplasmic side of the membrane. A helical transmembrane segment spans residues 167–186 (GVMTLMFILLAAMLWFVAAP). Over 187–190 (VVTY) the chain is Periplasmic. A helical membrane pass occupies residues 191 to 209 (ILCALVVLLASACFEWQIV). Residues 210-506 (RPIENVAHQA…RLEDAVTVLH (297 aa)) lie on the Cytoplasmic side of the membrane. A Methyl-accepting transducer domain is found at 263-492 (QVSSVRNGSE…ESAQVSAMVK (230 aa)).

Belongs to the methyl-accepting chemotaxis (MCP) protein family.

The protein resides in the cell inner membrane. In terms of biological role, signal transducer for aerotaxis. The aerotactic response is the accumulation of cells around air bubbles. The nature of the sensory stimulus detected by this protein is the proton motive force or cellular redox state. It uses a FAD prosthetic group as a redox sensor to monitor oxygen levels. This chain is Aerotaxis receptor (aer), found in Escherichia coli (strain K12).